A 1181-amino-acid polypeptide reads, in one-letter code: Cellulose synthase-like protein D5 (1181 aa).

The span at 1-17 (MVKSAASQSPSPVTITV) shows a compositional bias: polar residues. 2 disordered regions span residues 1–70 (MVKS…DEGR) and 202–229 (KEPY…LPQM). A compositionally biased stretch (low complexity) spans 48–59 (SSRATRRTSISS). The segment covering 210 to 222 (DDPETEEEDEEDE) has biased composition (acidic residues). Helical transmembrane passes span 312–332 (AIIS…GLFL) and 343–363 (AMWL…SWLL). Residue Asp-443 is part of the active site. The stretch at 497–542 (VRERRRVKREYDEFKVRINSLPEAIRRRSDAYNVHEELRAKKKQME) forms a coiled coil. The active site involves Asp-884. 6 helical membrane passes run 966–986 (LFLI…QFIV), 991–1011 (ITFL…SLLE), 1038–1058 (PAAV…SFTL), 1082–1102 (FLMV…AVGL), 1116–1136 (LVGG…FAKG), and 1146–1166 (TIVF…WVYI).

This sequence belongs to the glycosyltransferase 2 family. Plant cellulose synthase-like D subfamily. Expressed in vascular tissues.

It localises to the golgi apparatus membrane. In terms of biological role, involved in stem and root growth. Possesses xylan and homogalacturonan synthase activity. This Arabidopsis thaliana (Mouse-ear cress) protein is Cellulose synthase-like protein D5 (CSLD5).